Consider the following 572-residue polypeptide: Thiamine biosynthesis protein THI22 (572 aa).

The signal sequence occupies residues 1 to 19 (MVIILLGLCTLGFPRTAFC).

This sequence belongs to the thiaminase-2 family.

It localises to the secreted. Functionally, is not required for thiamine biosynthesis. The polypeptide is Thiamine biosynthesis protein THI22 (THI22) (Saccharomyces cerevisiae (strain ATCC 204508 / S288c) (Baker's yeast)).